Consider the following 155-residue polypeptide: Ribosomal RNA large subunit methyltransferase H (155 aa).

S-adenosyl-L-methionine-binding positions include Leu-72, Gly-103, and 122 to 127; that span reads LGRMVW.

Belongs to the RNA methyltransferase RlmH family. Homodimer.

The protein resides in the cytoplasm. The catalysed reaction is pseudouridine(1915) in 23S rRNA + S-adenosyl-L-methionine = N(3)-methylpseudouridine(1915) in 23S rRNA + S-adenosyl-L-homocysteine + H(+). Specifically methylates the pseudouridine at position 1915 (m3Psi1915) in 23S rRNA. The polypeptide is Ribosomal RNA large subunit methyltransferase H (Cereibacter sphaeroides (strain ATCC 17029 / ATH 2.4.9) (Rhodobacter sphaeroides)).